The following is an 859-amino-acid chain: Probable potassium transporter 14 (859 aa).

Residues 1–19 (METRSGGSGSASGGGGGGR) show a composition bias toward gly residues. The segment at 1 to 69 (METRSGGSGS…SRGGCSDSDD (69 aa)) is disordered. The Cytoplasmic segment spans residues 1–112 (METRSGGSGS…RHQEITVGRS (112 aa)). Low complexity predominate over residues 54-65 (PAAASGSRGGCS). A helical membrane pass occupies residues 113–133 (IVLAVQTLGVVFGDVGTSPLY). The Extracellular segment spans residues 134 to 155 (AFDVMFNKYPITSKEDVLGALS). The chain crosses the membrane as a helical span at residues 156–176 (LVIYTLILIPLLKYTLIALWG). Over 177–240 (NDDGEGGTFA…RLETSSMLKK (64 aa)) the chain is Cytoplasmic. The helical transmembrane segment at 241–261 (LLLMLVLFGTSMVIADGVVTP) threads the bilayer. The Extracellular segment spans residues 262–275 (AMSVMSAVNGLKVG). Residues 276–296 (ISSVNEGEVVMITVAVLIVLF) traverse the membrane as a helical segment. Residues 297 to 305 (TLQRFGSSK) are Cytoplasmic-facing. Residues 306–326 (VALAVGPALFIWFCCLAGIGI) form a helical membrane-spanning segment. Residues 327–359 (YNMKTYGSAVLQAFNPMYIYYYFERNPTQAWMS) are Extracellular-facing. Residues 360-380 (LGGCLLCATGSEAMFADLCYF) form a helical membrane-spanning segment. Over 381-388 (SVKSVQLT) the chain is Cytoplasmic. A helical transmembrane segment spans residues 389–409 (FVFLVLPCLLLGYLGQAAFLM). The Extracellular segment spans residues 410–417 (ENLTENQQ). Asn-411 carries N-linked (GlcNAc...) asparagine glycosylation. The chain crosses the membrane as a helical span at residues 418–438 (VFFLSIPNQAFWPVVFIAILA). The Cytoplasmic portion of the chain corresponds to 439 to 478 (AIIASRTMTTAIFSTIKQATALGCFPRLKIIHTSRSFMGQ). A helical transmembrane segment spans residues 479-499 (IYIPMMNWFLLVSCLAFVTMF). The Extracellular segment spans residues 500-508 (GSINEIGNA). The chain crosses the membrane as a helical span at residues 509–531 (YGIAELGVMMMTTVLVTIIMLLI). Residues 532–535 (WQIN) lie on the Cytoplasmic side of the membrane. The chain crosses the membrane as a helical span at residues 536–558 (IIVVLCFLTLSLGLELIFFSSVL). The Extracellular portion of the chain corresponds to 559–560 (GS). Residues 561–581 (VADGSWVLLVFAAVLYLIMYI) form a helical membrane-spanning segment. Over 582 to 859 (WNYGTKLKYE…MMQVAMQYMV (278 aa)) the chain is Cytoplasmic. Positions 752–772 (GVPPAEAAGTTEHPTIGSSMS) are disordered. The span at 763 to 772 (EHPTIGSSMS) shows a compositional bias: polar residues.

This sequence belongs to the HAK/KUP transporter (TC 2.A.72.3) family.

It localises to the membrane. Its function is as follows. High-affinity potassium transporter. This is Probable potassium transporter 14 (HAK14) from Oryza sativa subsp. japonica (Rice).